The primary structure comprises 319 residues: Methionyl-tRNA formyltransferase (319 aa).

116–119 contributes to the (6S)-5,6,7,8-tetrahydrofolate binding site; sequence SLLP.

This sequence belongs to the Fmt family.

It catalyses the reaction L-methionyl-tRNA(fMet) + (6R)-10-formyltetrahydrofolate = N-formyl-L-methionyl-tRNA(fMet) + (6S)-5,6,7,8-tetrahydrofolate + H(+). Attaches a formyl group to the free amino group of methionyl-tRNA(fMet). The formyl group appears to play a dual role in the initiator identity of N-formylmethionyl-tRNA by promoting its recognition by IF2 and preventing the misappropriation of this tRNA by the elongation apparatus. The chain is Methionyl-tRNA formyltransferase from Chlorobium phaeovibrioides (strain DSM 265 / 1930) (Prosthecochloris vibrioformis (strain DSM 265)).